Consider the following 36-residue polypeptide: uncharacterized protein (36 aa).

This is an uncharacterized protein from Treponema pallidum (strain Nichols).